Reading from the N-terminus, the 217-residue chain is ATP phosphoribosyltransferase (217 aa).

The protein belongs to the ATP phosphoribosyltransferase family. Short subfamily. In terms of assembly, heteromultimer composed of HisG and HisZ subunits.

It is found in the cytoplasm. It carries out the reaction 1-(5-phospho-beta-D-ribosyl)-ATP + diphosphate = 5-phospho-alpha-D-ribose 1-diphosphate + ATP. The protein operates within amino-acid biosynthesis; L-histidine biosynthesis; L-histidine from 5-phospho-alpha-D-ribose 1-diphosphate: step 1/9. In terms of biological role, catalyzes the condensation of ATP and 5-phosphoribose 1-diphosphate to form N'-(5'-phosphoribosyl)-ATP (PR-ATP). Has a crucial role in the pathway because the rate of histidine biosynthesis seems to be controlled primarily by regulation of HisG enzymatic activity. This Parasynechococcus marenigrum (strain WH8102) protein is ATP phosphoribosyltransferase.